The following is a 391-amino-acid chain: GTPase Obg (391 aa).

The region spanning 1–159 (MKFIDEALIR…RDLLLELMLL (159 aa)) is the Obg domain. The OBG-type G domain maps to 160 to 333 (ADVGMLGLPN…LTRDIMDFIE (174 aa)). Residues 166–173 (GLPNAGKS), 191–195 (FTTLV), 213–216 (DIPG), 283–286 (NKID), and 314–316 (SAA) contribute to the GTP site. Serine 173 and threonine 193 together coordinate Mg(2+).

The protein belongs to the TRAFAC class OBG-HflX-like GTPase superfamily. OBG GTPase family. Monomer. Requires Mg(2+) as cofactor.

It is found in the cytoplasm. Functionally, an essential GTPase which binds GTP, GDP and possibly (p)ppGpp with moderate affinity, with high nucleotide exchange rates and a fairly low GTP hydrolysis rate. Plays a role in control of the cell cycle, stress response, ribosome biogenesis and in those bacteria that undergo differentiation, in morphogenesis control. The protein is GTPase Obg of Actinobacillus pleuropneumoniae serotype 5b (strain L20).